The primary structure comprises 312 residues: Olfactory receptor 4L1 (312 aa).

Topologically, residues 1 to 25 are extracellular; the sequence is MDLKNGSLVTEFILLGFFGRWELQI. The N-linked (GlcNAc...) asparagine glycan is linked to Asn-5. Residues 26–49 traverse the membrane as a helical segment; the sequence is FFFVTFSLIYGATVMGNILIMVTV. Over 50 to 57 the chain is Cytoplasmic; the sequence is TCRSTLHS. Residues 58–79 form a helical membrane-spanning segment; it reads PLYFLLGNLSFLDMCLSTATTP. Over 80–100 the chain is Extracellular; it reads KMIIDLLTDHKTISVWGCVTQ. Residues Cys-97 and Cys-189 are joined by a disulfide bond. A helical transmembrane segment spans residues 101–120; that stretch reads MFFMHFFGGAEMTLLIIMAF. The Cytoplasmic segment spans residues 121-139; sequence DRYVAICKPLHYRTIMSHK. Residues 140–158 traverse the membrane as a helical segment; sequence LLKGFAILSWIIGFLHSIS. The Extracellular portion of the chain corresponds to 159–195; sequence QIVLTMNLPFCGHNVINNIFCDLPLVIKLACIETYTL. The helical transmembrane segment at 196-219 threads the bilayer; sequence ELFVIADSGLLSFTCFILLLVSYI. Topologically, residues 220–235 are cytoplasmic; sequence VILVSVPKKSSHGLSK. A helical membrane pass occupies residues 236-258; it reads ALSTLSAHIIVVTLFFGPCIFIY. Topologically, residues 259–269 are extracellular; it reads VWPFSSLASNK. Asn-268 carries an N-linked (GlcNAc...) asparagine glycan. The helical transmembrane segment at 270–289 threads the bilayer; the sequence is TLAVFYTVITPLLNPSIYTL. Residues 290 to 312 lie on the Cytoplasmic side of the membrane; that stretch reads RNKKMQEAIRKLRFQYVSSAQNF.

This sequence belongs to the G-protein coupled receptor 1 family.

The protein localises to the cell membrane. In terms of biological role, odorant receptor. The sequence is that of Olfactory receptor 4L1 (OR4L1) from Homo sapiens (Human).